The sequence spans 171 residues: Peptidyl-prolyl cis-trans isomerase slr1251 (171 aa).

A PPIase cyclophilin-type domain is found at 6-169; the sequence is FFDITIGSDT…QAIVISDCGE (164 aa).

This sequence belongs to the cyclophilin-type PPIase family.

It carries out the reaction [protein]-peptidylproline (omega=180) = [protein]-peptidylproline (omega=0). In terms of biological role, PPIases accelerate the folding of proteins. It catalyzes the cis-trans isomerization of proline imidic peptide bonds in oligopeptides. This chain is Peptidyl-prolyl cis-trans isomerase slr1251, found in Synechocystis sp. (strain ATCC 27184 / PCC 6803 / Kazusa).